Consider the following 167-residue polypeptide: Leptin (167 aa).

The signal sequence occupies residues 1-21 (MHCVPLFCFLWFCHHLYYSQA). Cysteines 117 and 167 form a disulfide.

The protein belongs to the leptin family.

The protein resides in the secreted. Its function is as follows. Key player in the regulation of energy balance and body weight control. Once released into the circulation, has central and peripheral effects by binding LEPR, found in many tissues, which results in the activation of several major signaling pathways. In the hypothalamus, acts as an appetite-regulating factor that induces a decrease in food intake and an increase in energy consumption by inducing anorexinogenic factors and suppressing orexigenic neuropeptides, also regulates bone mass and secretion of hypothalamo-pituitary-adrenal hormones. In the periphery, increases basal metabolism, influences reproductive function, regulates pancreatic beta-cell function and insulin secretion, is pro-angiogenic for endothelial cell and affects innate and adaptive immunity. In the arcuate nucleus of the hypothalamus, activates by depolarization POMC neurons inducing FOS and SOCS3 expression to release anorexigenic peptides and inhibits by hyperpolarization NPY neurons inducing SOCS3 with a consequent reduction on release of orexigenic peptides. In addition to its known satiety inducing effect, has a modulatory role in nutrient absorption. In the intestine, reduces glucose absorption by enterocytes by activating PKC and leading to a sequential activation of p38, PI3K and ERK signaling pathways which exerts an inhibitory effect on glucose absorption. Acts as a growth factor on certain tissues, through the activation of different signaling pathways increases expression of genes involved in cell cycle regulation such as CCND1, via JAK2-STAT3 pathway, or VEGFA, via MAPK1/3 and PI3K-AKT1 pathways. May also play an apoptotic role via JAK2-STAT3 pathway and up-regulation of BIRC5 expression. Pro-angiogenic, has mitogenic activity on vascular endothelial cells and plays a role in matrix remodeling by regulating the expression of matrix metalloproteinases (MMPs) and tissue inhibitors of metalloproteinases (TIMPs). In innate immunity, modulates the activity and function of neutrophils by increasing chemotaxis and the secretion of oxygen radicals. Increases phagocytosis by macrophages and enhances secretion of pro-inflammatory mediators. Increases cytotoxic ability of NK cells. Plays a pro-inflammatory role, in synergy with IL1B, by inducing NOS2 which promotes the production of IL6, IL8 and Prostaglandin E2, through a signaling pathway that involves JAK2, PI3K, MAP2K1/MEK1 and MAPK14/p38. In adaptive immunity, promotes the switch of memory T-cells towards T helper-1 cell immune responses. Increases CD4(+)CD25(-) T-cell proliferation and reduces autophagy during TCR (T-cell receptor) stimulation, through MTOR signaling pathway activation and BCL2 up-regulation. The polypeptide is Leptin (LEP) (Sminthopsis crassicaudata (Fat-tailed dunnart)).